A 935-amino-acid chain; its full sequence is Phosphoenolpyruvate carboxylase (935 aa).

Catalysis depends on residues histidine 161 and lysine 593.

The protein belongs to the PEPCase type 1 family. The cofactor is Mg(2+).

The enzyme catalyses oxaloacetate + phosphate = phosphoenolpyruvate + hydrogencarbonate. Forms oxaloacetate, a four-carbon dicarboxylic acid source for the tricarboxylic acid cycle. The sequence is that of Phosphoenolpyruvate carboxylase from Mycolicibacterium paratuberculosis (strain ATCC BAA-968 / K-10) (Mycobacterium paratuberculosis).